A 457-amino-acid polypeptide reads, in one-letter code: UDP-N-acetylmuramoyl-tripeptide--D-alanyl-D-alanine ligase (457 aa).

113–119 (GSNGKTT) is an ATP binding site.

The protein belongs to the MurCDEF family. MurF subfamily.

It is found in the cytoplasm. It catalyses the reaction D-alanyl-D-alanine + UDP-N-acetyl-alpha-D-muramoyl-L-alanyl-gamma-D-glutamyl-meso-2,6-diaminopimelate + ATP = UDP-N-acetyl-alpha-D-muramoyl-L-alanyl-gamma-D-glutamyl-meso-2,6-diaminopimeloyl-D-alanyl-D-alanine + ADP + phosphate + H(+). It functions in the pathway cell wall biogenesis; peptidoglycan biosynthesis. Functionally, involved in cell wall formation. Catalyzes the final step in the synthesis of UDP-N-acetylmuramoyl-pentapeptide, the precursor of murein. The polypeptide is UDP-N-acetylmuramoyl-tripeptide--D-alanyl-D-alanine ligase (Bacillus subtilis (strain 168)).